Reading from the N-terminus, the 236-residue chain is Ribose-5-phosphate isomerase A (236 aa).

Residues 33-36 (TGST), 90-93 (DGAD), and 103-106 (KGGG) contribute to the substrate site. Catalysis depends on Glu112, which acts as the Proton acceptor. Position 130 (Lys130) interacts with substrate.

It belongs to the ribose 5-phosphate isomerase family. In terms of assembly, homodimer.

The catalysed reaction is aldehydo-D-ribose 5-phosphate = D-ribulose 5-phosphate. Its pathway is carbohydrate degradation; pentose phosphate pathway; D-ribose 5-phosphate from D-ribulose 5-phosphate (non-oxidative stage): step 1/1. Functionally, catalyzes the reversible conversion of ribose-5-phosphate to ribulose 5-phosphate. This Trichormus variabilis (strain ATCC 29413 / PCC 7937) (Anabaena variabilis) protein is Ribose-5-phosphate isomerase A.